The primary structure comprises 511 residues: Maturase K (511 aa).

The protein belongs to the intron maturase 2 family. MatK subfamily.

It localises to the plastid. The protein resides in the chloroplast. Usually encoded in the trnK tRNA gene intron. Probably assists in splicing its own and other chloroplast group II introns. The polypeptide is Maturase K (Nandina domestica (Heavenly bamboo)).